We begin with the raw amino-acid sequence, 294 residues long: Secreted frizzled-related protein 2 (294 aa).

A signal peptide spans 1–24 (MPRGPGSLLLLVLASHCCLGSARG). An FZ domain is found at 34–154 (YKRSNCKPIP…PQDNDLCIPL (121 aa)). 8 disulfides stabilise this stretch: Cys39–Cys102, Cys49–Cys95, Cys86–Cys124, Cys113–Cys151, Cys117–Cys141, Cys171–Cys244, Cys174–Cys246, and Cys189–Cys294. One can recognise an NTR domain in the interval 171-294 (CEACKNKNED…ISRSIRKLQC (124 aa)).

Belongs to the secreted frizzled-related protein (sFRP) family.

It is found in the secreted. In terms of biological role, soluble frizzled-related proteins (sFRPS) function as modulators of Wnt signaling through direct interaction with Wnts. They have a role in regulating cell growth and differentiation in specific cell types. SFRP2 may be important for eye retinal development and for myogenesis. The protein is Secreted frizzled-related protein 2 (SFRP2) of Canis lupus familiaris (Dog).